The sequence spans 349 residues: Putative inosamine-phosphate amidinotransferase 2 (349 aa).

Belongs to the amidinotransferase family.

It carries out the reaction 1-amino-1-deoxy-scyllo-inositol 4-phosphate + L-arginine = 1-guanidino-1-deoxy-scyllo-inositol 4-phosphate + L-ornithine. Its pathway is antibiotic biosynthesis; streptomycin biosynthesis. Its function is as follows. It is not obvious if strB2 participates in streptomycin biosynthesis as an inosamine-phosphate amidinotransferase. Attempt to measure its activity have failed and the nucleophilic cysteine which is the key residue for amidine transfer is not conserved but replaced by a glycine residue. This Streptomyces griseus protein is Putative inosamine-phosphate amidinotransferase 2 (strB2).